The sequence spans 342 residues: Fatty acid desaturase 6 (342 aa).

2 consecutive transmembrane segments (helical) span residues 39–59 and 63–83; these read GVDCAILALSLLALPAGFLCL and NILAFATGITILGVCHYTLTV. Positions 87-91 match the Histidine box-1 motif; sequence HLATH. The chain crosses the membrane as a helical span at residues 100–120; sequence WSKILMIFFLEVCTAFSAEFA. Residues 124-128 carry the Histidine box-2 motif; it reads HVNLH. Helical transmembrane passes span 151–171 and 185–205; these read YVYMFLGPLLVPIITPLVALE and LGFICLGLYSQYWLFMNVSGF. A Histidine box-3 motif is present at residues 277–281; the sequence is HVEHH.

This sequence belongs to the fatty acid desaturase type 1 family.

It localises to the membrane. Its pathway is lipid metabolism; fatty acid metabolism. This is Fatty acid desaturase 6 (Fads6) from Mus musculus (Mouse).